The following is a 252-amino-acid chain: Mediator of RNA polymerase II transcription subunit 4 (252 aa).

2 coiled-coil regions span residues 5-31 and 70-112; these read KKST…ETLA and KTHQ…QAKE. The segment at 213-252 is disordered; that stretch reads MLPPNHSNEFLMESLGPNKENEEDVEVMSTDSSSSSSDSD. Over residues 241 to 252 the composition is skewed to low complexity; the sequence is STDSSSSSSDSD.

The protein belongs to the Mediator complex subunit 4 family. In terms of assembly, component of the Mediator complex.

It is found in the nucleus. Component of the Mediator complex, a coactivator involved in the regulated transcription of nearly all RNA polymerase II-dependent genes. Mediator functions as a bridge to convey information from gene-specific regulatory proteins to the basal RNA polymerase II transcription machinery. Mediator is recruited to promoters by direct interactions with regulatory proteins and serves as a scaffold for the assembly of a functional preinitiation complex with RNA polymerase II and the general transcription factors. The polypeptide is Mediator of RNA polymerase II transcription subunit 4 (med4) (Xenopus laevis (African clawed frog)).